We begin with the raw amino-acid sequence, 210 residues long: 2-Cys peroxiredoxin BAS1, chloroplastic (210 aa).

The N-terminal 10 residues, 1-10 (DARARSFVAR), are a transit peptide targeting the chloroplast. Residues 18–177 (PLVGNKAPDF…TLRTLQALQY (160 aa)) form the Thioredoxin domain. The Cysteine sulfenic acid (-SOH) intermediate role is filled by C64.

This sequence belongs to the peroxiredoxin family. AhpC/Prx1 subfamily. As to quaternary structure, homodimer; disulfide-linked, upon oxidation. In terms of tissue distribution, expressed in leaf blade, sheath, basiplast, stem and green spike. Maximal expression in young developing shoots segments where cell division and elongation take place. Not expressed in roots.

Its subcellular location is the plastid. It localises to the chloroplast. It carries out the reaction a hydroperoxide + [thioredoxin]-dithiol = an alcohol + [thioredoxin]-disulfide + H2O. In terms of biological role, thiol-specific peroxidase that catalyzes the reduction of hydrogen peroxide and organic hydroperoxides to water and alcohols, respectively. Plays a role in cell protection against oxidative stress by detoxifying peroxides. May be an antioxidant enzyme particularly in the developing shoot and photosynthesizing leaf. The chain is 2-Cys peroxiredoxin BAS1, chloroplastic (BAS1) from Hordeum vulgare (Barley).